A 736-amino-acid chain; its full sequence is Subtilisin-like protease SBT4.12 (736 aa).

A signal peptide spans 1–24; sequence MANLAASTCLYSWLLVLLLSSVSA. A propeptide spans 25–110 (activation peptide); it reads IIDEDTQVYI…VFPNKILQLH (86 aa). The Inhibitor I9 domain occupies 32–110; sequence VYIVYMGSLS…VFPNKILQLH (79 aa). One can recognise a Peptidase S8 domain in the interval 114-580; it reads SWDFMGVKEG…AGHVDPMAAL (467 aa). Asp142 serves as the catalytic Charge relay system. Asn173 carries an N-linked (GlcNAc...) asparagine glycan. Catalysis depends on His197, which acts as the Charge relay system. Asn220, Asn381, and Asn459 each carry an N-linked (GlcNAc...) asparagine glycan. The region spanning 353-437 is the PA domain; it reads KYPLVYGKSA…GLKAKDFKSL (85 aa). Catalysis depends on Ser519, which acts as the Charge relay system. N-linked (GlcNAc...) asparagine glycosylation is found at Asn601, Asn649, and Asn659.

Belongs to the peptidase S8 family. The C-terminal propeptide is autocleaved. Specifically expressed in root stele of the root hair zone.

Its subcellular location is the secreted. The polypeptide is Subtilisin-like protease SBT4.12 (Arabidopsis thaliana (Mouse-ear cress)).